A 356-amino-acid chain; its full sequence is MNKQNLLSLNQDALNDFFVCLGEKHYRTKQIMQWIYKVHEFDFDKMFNFSKSLREELNKIACIEFPKVVKQKFALDKVIKWVLALSEDNYIEMVYIPEKDRGTLCISSQVGCALACTFCSTGMQGFNKNLTTAEIIAQVLIANKYLNSKTKRISNIVFMGMGEPLLNEQAVYNACDLLLDDLAFGLSRRKVTISTSGIVPSILRMSKRTPVSLAISLHAPNNQLRDKLVPVNQKYSIEELLKACKVYLNAGTQERHILFEYVMLKDVNDSTEHANKLAKLLKAISAKVNLIPFNSFERTQYQSSNAQTIEKFQDILYQQGIRTMMRRTRGEDIDGACGQLAGKVLNKTKKLNARKH.

Glu-92 acts as the Proton acceptor in catalysis. A Radical SAM core domain is found at 98–334 (EKDRGTLCIS…MRRTRGEDID (237 aa)). A disulfide bridge connects residues Cys-105 and Cys-337. [4Fe-4S] cluster is bound by residues Cys-112, Cys-116, and Cys-119. Residues 162 to 163 (GE), Ser-194, 216 to 218 (SLH), and Asn-294 each bind S-adenosyl-L-methionine. Cys-337 (S-methylcysteine intermediate) is an active-site residue.

It belongs to the radical SAM superfamily. RlmN family. [4Fe-4S] cluster is required as a cofactor.

The protein resides in the cytoplasm. It catalyses the reaction adenosine(2503) in 23S rRNA + 2 reduced [2Fe-2S]-[ferredoxin] + 2 S-adenosyl-L-methionine = 2-methyladenosine(2503) in 23S rRNA + 5'-deoxyadenosine + L-methionine + 2 oxidized [2Fe-2S]-[ferredoxin] + S-adenosyl-L-homocysteine. The catalysed reaction is adenosine(37) in tRNA + 2 reduced [2Fe-2S]-[ferredoxin] + 2 S-adenosyl-L-methionine = 2-methyladenosine(37) in tRNA + 5'-deoxyadenosine + L-methionine + 2 oxidized [2Fe-2S]-[ferredoxin] + S-adenosyl-L-homocysteine. In terms of biological role, specifically methylates position 2 of adenine 2503 in 23S rRNA and position 2 of adenine 37 in tRNAs. m2A2503 modification seems to play a crucial role in the proofreading step occurring at the peptidyl transferase center and thus would serve to optimize ribosomal fidelity. The protein is Dual-specificity RNA methyltransferase RlmN of Vesicomyosocius okutanii subsp. Calyptogena okutanii (strain HA).